We begin with the raw amino-acid sequence, 291 residues long: MIIIGGTATNGIDENLSKIISVPLLKVEHKVFPDGESYIRIPQHITNQEILVVQSLYPPQDKHFVELLLILETLADMKNNKITAIVPYLAYSRQDRRFKEGEALSIKTILNAIARAGADVLIVIEPHKEEELSYFGKEVKIADPMPELAKEVSKKVEKPFVLAPDRGALERAKRLAEQLNAEYSYIEKERDRDTGEVRIKNLPELRLSGKDVIIVDDIISTGGTMIQATRAAYEHGARKVISVAVHSLFLDNAYEKLINSGVKEIVTTNTIPQDPSKVTVVDVSPAIARKI.

ATP contacts are provided by residues 34–36 (DGE) and 93–94 (RQ). Positions 127 and 165 each coordinate Mg(2+). Residue lysine 188 is part of the active site. D-ribose 5-phosphate is bound by residues arginine 190, aspartate 216, and 220-224 (STGGT).

Belongs to the ribose-phosphate pyrophosphokinase family. Class III (archaeal) subfamily. Mg(2+) serves as cofactor.

Its subcellular location is the cytoplasm. The catalysed reaction is D-ribose 5-phosphate + ATP = 5-phospho-alpha-D-ribose 1-diphosphate + AMP + H(+). The protein operates within metabolic intermediate biosynthesis; 5-phospho-alpha-D-ribose 1-diphosphate biosynthesis; 5-phospho-alpha-D-ribose 1-diphosphate from D-ribose 5-phosphate (route I): step 1/1. Its function is as follows. Involved in the biosynthesis of the central metabolite phospho-alpha-D-ribosyl-1-pyrophosphate (PRPP) via the transfer of pyrophosphoryl group from ATP to 1-hydroxyl of ribose-5-phosphate (Rib-5-P). The protein is Ribose-phosphate pyrophosphokinase of Sulfurisphaera tokodaii (strain DSM 16993 / JCM 10545 / NBRC 100140 / 7) (Sulfolobus tokodaii).